The following is a 275-amino-acid chain: Large ribosomal subunit protein uL2c (275 aa).

Disordered stretches follow at residues 32–53 (SLSKMNHRSKGRNNRGVITCRH) and 218–242 (PTVRGSVMNPNDHPHGGGEGRAPIG).

The protein belongs to the universal ribosomal protein uL2 family. In terms of assembly, part of the 50S ribosomal subunit.

It is found in the plastid. The protein localises to the chloroplast. In Tetradesmus obliquus (Green alga), this protein is Large ribosomal subunit protein uL2c (rpl2).